The chain runs to 157 residues: Phosphopantetheine adenylyltransferase (157 aa).

A substrate-binding site is contributed by T8. Residues 8–9 (TF) and H16 contribute to the ATP site. Substrate is bound by residues K40, T72, and R86. ATP-binding positions include 87–89 (GLR), E97, and 122–128 (YSFLSSS).

It belongs to the bacterial CoaD family. In terms of assembly, homohexamer. The cofactor is Mg(2+).

The protein resides in the cytoplasm. It carries out the reaction (R)-4'-phosphopantetheine + ATP + H(+) = 3'-dephospho-CoA + diphosphate. It functions in the pathway cofactor biosynthesis; coenzyme A biosynthesis; CoA from (R)-pantothenate: step 4/5. In terms of biological role, reversibly transfers an adenylyl group from ATP to 4'-phosphopantetheine, yielding dephospho-CoA (dPCoA) and pyrophosphate. The protein is Phosphopantetheine adenylyltransferase of Prochlorococcus marinus (strain MIT 9301).